We begin with the raw amino-acid sequence, 236 residues long: Lectin (236 aa).

N-linked (GlcNAc...) asparagine glycosylation occurs at Asn-118.

This sequence belongs to the leguminous lectin family. Homodimer of noncovalently associated chains.

Functionally, D-mannose and D-glucose specific lectin. The protein is Lectin of Onobrychis viciifolia (Common sainfoin).